The chain runs to 83 residues: Small ribosomal subunit protein eS21 (83 aa).

The protein belongs to the eukaryotic ribosomal protein eS21 family. Component of the 40S small ribosomal subunit.

It is found in the cytoplasm. It localises to the cytosol. The protein localises to the rough endoplasmic reticulum. The chain is Small ribosomal subunit protein eS21 (RpS21) from Spodoptera frugiperda (Fall armyworm).